We begin with the raw amino-acid sequence, 318 residues long: Aspartate carbamoyltransferase catalytic subunit (318 aa).

Residues Arg-67 and Thr-68 each coordinate carbamoyl phosphate. Residue Lys-95 participates in L-aspartate binding. Arg-117, His-145, and Gln-148 together coordinate carbamoyl phosphate. Positions 178 and 236 each coordinate L-aspartate. Positions 277 and 278 each coordinate carbamoyl phosphate.

The protein belongs to the aspartate/ornithine carbamoyltransferase superfamily. ATCase family. Heterododecamer (2C3:3R2) of six catalytic PyrB chains organized as two trimers (C3), and six regulatory PyrI chains organized as three dimers (R2).

It carries out the reaction carbamoyl phosphate + L-aspartate = N-carbamoyl-L-aspartate + phosphate + H(+). It participates in pyrimidine metabolism; UMP biosynthesis via de novo pathway; (S)-dihydroorotate from bicarbonate: step 2/3. In terms of biological role, catalyzes the condensation of carbamoyl phosphate and aspartate to form carbamoyl aspartate and inorganic phosphate, the committed step in the de novo pyrimidine nucleotide biosynthesis pathway. The chain is Aspartate carbamoyltransferase catalytic subunit from Roseiflexus castenholzii (strain DSM 13941 / HLO8).